The following is a 578-amino-acid chain: Putative diflavin flavoprotein A 2 (578 aa).

The segment at 39–233 (QQGTTSNSYL…PPPRLYAPAH (195 aa)) is zinc metallo-hydrolase. Residues 262 to 404 (VALFYASAYG…AANEFAQALK (143 aa)) enclose the Flavodoxin-like domain. Residues 429 to 578 (VNRVVGSLCV…TAIQHRKTSS (150 aa)) are flavodoxin-reductase-like.

In the N-terminal section; belongs to the zinc metallo-hydrolase group 3 family. It in the C-terminal section; belongs to the flavodoxin reductase family. Fe cation serves as cofactor.

Mediates electron transfer from NADH to oxygen, reducing it to water. This modular protein has 3 redox cofactors, in other organisms the same activity requires 2 or 3 proteins. This chain is Putative diflavin flavoprotein A 2 (dfa2), found in Thermosynechococcus vestitus (strain NIES-2133 / IAM M-273 / BP-1).